A 138-amino-acid polypeptide reads, in one-letter code: MRHGKVHRKLNRTAEHRKAMFANMSASLIKHEQIVTTLPKAKELRPIVEKLVTLGKKGGLAKRRQAISEMRDIDQVKKLFDVLAPRYKDRHGGYTRIIKAGFRYGDNAPMAVIEFVDRDVEAKGQDSGPVQNEASEAA.

Belongs to the bacterial ribosomal protein bL17 family. As to quaternary structure, part of the 50S ribosomal subunit. Contacts protein L32.

This Nitrobacter winogradskyi (strain ATCC 25391 / DSM 10237 / CIP 104748 / NCIMB 11846 / Nb-255) protein is Large ribosomal subunit protein bL17.